The sequence spans 126 residues: Acidic phospholipase A2 4 (126 aa).

A signal peptide is located at residue Ser1. Residues 2–7 constitute a propeptide that is removed on maturation; sequence NRPMPL. Disulfide bonds link Cys18/Cys78, Cys33/Cys125, Cys35/Cys51, Cys50/Cys106, Cys57/Cys99, Cys67/Cys92, and Cys85/Cys97. 3 residues coordinate Ca(2+): Tyr34, Gly36, and Gly38. Residue His54 is part of the active site. Asp55 lines the Ca(2+) pocket. Asp100 is a catalytic residue.

This sequence belongs to the phospholipase A2 family. Group I subfamily. D49 sub-subfamily. Monomer. The cofactor is Ca(2+). In terms of tissue distribution, expressed by the venom gland.

The protein localises to the secreted. It catalyses the reaction a 1,2-diacyl-sn-glycero-3-phosphocholine + H2O = a 1-acyl-sn-glycero-3-phosphocholine + a fatty acid + H(+). Its function is as follows. Snake venom phospholipase A2 (PLA2) that exhibits strong anticoagulant activity, which is not due to the catalytic activity. PLA2 catalyzes the calcium-dependent hydrolysis of the 2-acyl groups in 3-sn-phosphoglycerides. The polypeptide is Acidic phospholipase A2 4 (Naja sagittifera (Andaman cobra)).